The primary structure comprises 428 residues: Anaerobic glycerol-3-phosphate dehydrogenase subunit B (428 aa).

This sequence belongs to the anaerobic G-3-P dehydrogenase subunit B family. As to quaternary structure, composed of a catalytic GlpA/B dimer and of membrane bound GlpC. The cofactor is FMN.

The catalysed reaction is a quinone + sn-glycerol 3-phosphate = dihydroxyacetone phosphate + a quinol. It participates in polyol metabolism; glycerol degradation via glycerol kinase pathway; glycerone phosphate from sn-glycerol 3-phosphate (anaerobic route): step 1/1. In terms of biological role, conversion of glycerol 3-phosphate to dihydroxyacetone. Uses fumarate or nitrate as electron acceptor. This chain is Anaerobic glycerol-3-phosphate dehydrogenase subunit B, found in Actinobacillus pleuropneumoniae serotype 5b (strain L20).